A 337-amino-acid chain; its full sequence is Phosphate acyltransferase (337 aa).

The protein belongs to the PlsX family. In terms of assembly, homodimer. Probably interacts with PlsY.

The protein localises to the cytoplasm. It catalyses the reaction a fatty acyl-[ACP] + phosphate = an acyl phosphate + holo-[ACP]. It functions in the pathway lipid metabolism; phospholipid metabolism. Its function is as follows. Catalyzes the reversible formation of acyl-phosphate (acyl-PO(4)) from acyl-[acyl-carrier-protein] (acyl-ACP). This enzyme utilizes acyl-ACP as fatty acyl donor, but not acyl-CoA. The sequence is that of Phosphate acyltransferase from Polynucleobacter necessarius subsp. necessarius (strain STIR1).